The primary structure comprises 158 residues: 2-C-methyl-D-erythritol 2,4-cyclodiphosphate synthase (158 aa).

2 residues coordinate a divalent metal cation: D9 and H11. 4-CDP-2-C-methyl-D-erythritol 2-phosphate contacts are provided by residues 9–11 and 35–36; these read DVH and HS. Position 43 (H43) interacts with a divalent metal cation. 4-CDP-2-C-methyl-D-erythritol 2-phosphate contacts are provided by residues 57 to 59, 62 to 66, 133 to 136, F140, and R143; these read DIG, FPDTD, and TTTE.

The protein belongs to the IspF family. As to quaternary structure, homotrimer. A divalent metal cation serves as cofactor.

It catalyses the reaction 4-CDP-2-C-methyl-D-erythritol 2-phosphate = 2-C-methyl-D-erythritol 2,4-cyclic diphosphate + CMP. Its pathway is isoprenoid biosynthesis; isopentenyl diphosphate biosynthesis via DXP pathway; isopentenyl diphosphate from 1-deoxy-D-xylulose 5-phosphate: step 4/6. Its function is as follows. Involved in the biosynthesis of isopentenyl diphosphate (IPP) and dimethylallyl diphosphate (DMAPP), two major building blocks of isoprenoid compounds. Catalyzes the conversion of 4-diphosphocytidyl-2-C-methyl-D-erythritol 2-phosphate (CDP-ME2P) to 2-C-methyl-D-erythritol 2,4-cyclodiphosphate (ME-CPP) with a corresponding release of cytidine 5-monophosphate (CMP). In Haemophilus influenzae (strain 86-028NP), this protein is 2-C-methyl-D-erythritol 2,4-cyclodiphosphate synthase.